The chain runs to 268 residues: Centromere protein Q (268 aa).

The disordered stretch occupies residues 1-80; the sequence is MSGKANASKK…KTWQPLSKST (80 aa). Phosphoserine occurs at positions 31 and 50. The segment covering 58–72 has biased composition (basic residues); that stretch reads TNLKHGKTAASKRKT. Positions 170-206 form a coiled coil; the sequence is ELMTGNIQSLKNKIQILASEVEEEEERVKQMHQINSS. S249 is subject to Phosphoserine.

Belongs to the CENP-Q/OKP1 family. As to quaternary structure, component of the CENPA-CAD complex, composed of CENPI, CENPK, CENPL, CENPO, CENPP, CENPQ, CENPR and CENPS. The CENPA-CAD complex interacts with the CENPA-NAC complex, at least composed of CENPA, CENPC, CENPH, CENPM, CENPN, CENPT and CENPU. Post-translationally, phosphorylation at Ser-50 is essential for CENPE recruitment to kinetochores and orderly chromosome congression.

The protein localises to the nucleus. It is found in the chromosome. The protein resides in the centromere. Functionally, component of the CENPA-CAD (nucleosome distal) complex, a complex recruited to centromeres which is involved in assembly of kinetochore proteins, mitotic progression and chromosome segregation. May be involved in incorporation of newly synthesized CENPA into centromeres via its interaction with the CENPA-NAC complex. Plays an important role in chromosome congression and in the recruitment of CENP-O complex (which comprises CENPO, CENPP, CENPQ and CENPU), CENPE and PLK1 to the kinetochores. The protein is Centromere protein Q (CENPQ) of Homo sapiens (Human).